A 444-amino-acid polypeptide reads, in one-letter code: ATP-dependent RNA helicase SrmB (444 aa).

The Q motif signature appears at 4–32 (TTFSELELDESLLEALQDKGFTRPTAIQA). Positions 35-209 (IPPALDGRDV…AERLLEDPVE (175 aa)) constitute a Helicase ATP-binding domain. ATP is bound at residue 48-55 (APTGTGKT). The DEAD box signature appears at 157–160 (DEAD). The Helicase C-terminal domain maps to 238-387 (LLVHLLKQPE…ELRPKTRAPS (150 aa)). Residues 382–391 (KTRAPSEKQT) are compositionally biased toward basic and acidic residues. The segment at 382–444 (KTRAPSEKQT…TGVPPQTTEE (63 aa)) is disordered. Composition is skewed to basic residues over residues 394–406 (PSKK…AEKK) and 414–432 (PRVK…RRKP).

This sequence belongs to the DEAD box helicase family. SrmB subfamily. As to quaternary structure, interacts with the 50S ribosomal subunit. Forms a complex with the 50S ribosomal proteins L4 and L24, and a region near the 5'-end of 23S rRNA.

The protein resides in the cytoplasm. The catalysed reaction is ATP + H2O = ADP + phosphate + H(+). Functionally, DEAD-box RNA helicase involved in the assembly of the 50S ribosomal subunit at low temperature. Exhibits RNA-stimulated ATP hydrolysis and RNA unwinding activity. Acts before DeaD. This is ATP-dependent RNA helicase SrmB from Escherichia coli (strain K12).